The primary structure comprises 123 residues: Large ribosomal subunit protein uL14 (123 aa).

It belongs to the universal ribosomal protein uL14 family. As to quaternary structure, part of the 50S ribosomal subunit. Forms a cluster with proteins L3 and L19. In the 70S ribosome, L14 and L19 interact and together make contacts with the 16S rRNA in bridges B5 and B8.

In terms of biological role, binds to 23S rRNA. Forms part of two intersubunit bridges in the 70S ribosome. The sequence is that of Large ribosomal subunit protein uL14 from Hamiltonella defensa subsp. Acyrthosiphon pisum (strain 5AT).